Here is a 98-residue protein sequence, read N- to C-terminus: NADH-ubiquinone oxidoreductase chain 4L (98 aa).

3 helical membrane-spanning segments follow: residues 2-22 (PSIS…MLMF), 29-49 (SLLC…LIIL), and 61-81 (ILLL…LVMI).

This sequence belongs to the complex I subunit 4L family. As to quaternary structure, core subunit of respiratory chain NADH dehydrogenase (Complex I) which is composed of 45 different subunits.

The protein localises to the mitochondrion inner membrane. It catalyses the reaction a ubiquinone + NADH + 5 H(+)(in) = a ubiquinol + NAD(+) + 4 H(+)(out). Core subunit of the mitochondrial membrane respiratory chain NADH dehydrogenase (Complex I) which catalyzes electron transfer from NADH through the respiratory chain, using ubiquinone as an electron acceptor. Part of the enzyme membrane arm which is embedded in the lipid bilayer and involved in proton translocation. The sequence is that of NADH-ubiquinone oxidoreductase chain 4L (MT-ND4L) from Mirza coquereli (Coquerel's giant mouse lemur).